Here is a 245-residue protein sequence, read N- to C-terminus: Enolase-phosphatase E1 (245 aa).

The protein belongs to the HAD-like hydrolase superfamily. MasA/MtnC family. In terms of assembly, monomer. Mg(2+) is required as a cofactor.

It carries out the reaction 5-methylsulfanyl-2,3-dioxopentyl phosphate + H2O = 1,2-dihydroxy-5-(methylsulfanyl)pent-1-en-3-one + phosphate. It functions in the pathway amino-acid biosynthesis; L-methionine biosynthesis via salvage pathway; L-methionine from S-methyl-5-thio-alpha-D-ribose 1-phosphate: step 3/6. It participates in amino-acid biosynthesis; L-methionine biosynthesis via salvage pathway; L-methionine from S-methyl-5-thio-alpha-D-ribose 1-phosphate: step 4/6. Functionally, bifunctional enzyme that catalyzes the enolization of 2,3-diketo-5-methylthiopentyl-1-phosphate (DK-MTP-1-P) into the intermediate 2-hydroxy-3-keto-5-methylthiopentenyl-1-phosphate (HK-MTPenyl-1-P), which is then dephosphorylated to form the acireductone 1,2-dihydroxy-3-keto-5-methylthiopentene (DHK-MTPene). This chain is Enolase-phosphatase E1, found in Synechococcus sp. (strain CC9902).